Reading from the N-terminus, the 345-residue chain is Phenylalanine--tRNA ligase alpha subunit (345 aa).

Residue E259 coordinates Mg(2+).

The protein belongs to the class-II aminoacyl-tRNA synthetase family. Phe-tRNA synthetase alpha subunit type 1 subfamily. Tetramer of two alpha and two beta subunits. Mg(2+) is required as a cofactor.

It is found in the cytoplasm. The enzyme catalyses tRNA(Phe) + L-phenylalanine + ATP = L-phenylalanyl-tRNA(Phe) + AMP + diphosphate + H(+). The sequence is that of Phenylalanine--tRNA ligase alpha subunit from Lactococcus lactis subsp. cremoris (strain SK11).